A 1585-amino-acid chain; its full sequence is Adhesion G protein-coupled receptor B2 (1585 aa).

An N-terminal signal peptide occupies residues 1–32 (MENTGWMGKGHRMTPACPLLLSVILSLRLATA). Over 33–936 (FDPAPSACSA…ELAGSPSVPL (904 aa)) the chain is Extracellular. N-linked (GlcNAc...) asparagine glycosylation is found at N106, N191, and N192. A compositionally biased stretch (low complexity) spans 229-238 (AGAGSTTTTS). A disordered region spans residues 229–271 (AGAGSTTTTSPGPPAAHTLSNALVPGGPAPPAEADLHSGSSND). O-linked (Xyl...) (chondroitin sulfate) serine glycosylation is present at S266. TSP type-1 domains lie at 309–362 (DPAA…ATCP), 364–417 (HGVW…AACP), 419–472 (EGQW…LECP), and 475–528 (DSKW…KRCP). 14 disulfides stabilise this stretch: C321–C355, C325–C361, C336–C345, C376–C411, C380–C416, C391–C401, C431–C466, C435–C471, C446–C456, C487–C522, C491–C527, C502–C512, C534–C569, and C557–C587. A glycan (N-linked (GlcNAc...) asparagine) is linked at N356. N437 carries N-linked (GlcNAc...) asparagine glycosylation. N560 and N645 each carry an N-linked (GlcNAc...) asparagine glycan. The GAIN-B domain maps to 757 to 924 (DRLFLPKEVL…AVLAQPPKDL (168 aa)). Residues 767 to 806 (SLSSPGKPATSGAAGSPGRGRGPGTVPPGPGHSHQRLLPA) form a disordered region. A compositionally biased stretch (low complexity) spans 769–780 (SSPGKPATSGAA). N867 is a glycosylation site (N-linked (GlcNAc...) asparagine). 2 disulfides stabilise this stretch: C874-C906 and C894-C908. A GPS region spans residues 874 to 924 (CASWDYSRADASSGDWDTENCQTLETQAAHTRCQCQHLSTFAVLAQPPKDL). The chain crosses the membrane as a helical span at residues 937–957 (VIGCAVSCMALLTLLAIYAAF). Residues 958 to 965 (WRFIKSER) lie on the Cytoplasmic side of the membrane. The chain crosses the membrane as a helical span at residues 966–986 (SIILLNFCLSILASNILILVG). Over 987–994 (QSRVLSKG) the chain is Extracellular. The helical transmembrane segment at 995–1015 (VCTMTAAFLHFFFLSSFCWVL) threads the bilayer. Topologically, residues 1016 to 1036 (TEAWQSYLAVIGRMRTRLVRK) are cytoplasmic. A helical transmembrane segment spans residues 1037-1057 (RFLCLGWGLPALVVAVSVGFT). The Extracellular portion of the chain corresponds to 1058–1078 (RTKGYGTSSYCWLSLEGGLLY). A helical membrane pass occupies residues 1079-1099 (AFVGPAAVIVLVNMLIGIIVF). Residues 1100–1121 (NKLMARDGISDKSKKQRAGSER) are Cytoplasmic-facing. Residues 1122–1142 (CPWASLLLPCSACGAVPSPLL) traverse the membrane as a helical segment. The Extracellular segment spans residues 1143–1153 (SSASARNAMAS). Residues 1154–1174 (LWSSCVVLPLLALTWMSAVLA) traverse the membrane as a helical segment. The Cytoplasmic portion of the chain corresponds to 1175–1585 (MTDRRSVLFQ…PPDGDFQTEV (411 aa)). Y1351 carries the post-translational modification Phosphotyrosine. 3 disordered regions span residues 1359–1385 (LSLQ…PRRA), 1423–1454 (FQPP…GSTM), and 1498–1585 (YRSQ…QTEV). Over residues 1372–1382 (DAPRARPEGTP) the composition is skewed to basic and acidic residues. Residues 1543-1552 (SWSTFKSMTL) show a composition bias toward polar residues. The span at 1575-1585 (EPPDGDFQTEV) shows a compositional bias: acidic residues.

The protein belongs to the G-protein coupled receptor 2 family. Adhesion G-protein coupled receptor (ADGR) subfamily. Heterodimer of 2 chains generated by proteolytic processing; the large extracellular N-terminal fragment and the membrane-bound C-terminal fragment predominantly remain associated and non-covalently linked. Interacts with GABPB2. Interacts (via carboxy-terminus) with TAX1BP3. Interacts with GNAZ. Interacts with SH3GL2. Glycosylated. Post-translationally, autoproteolytically processed at the GPS region of the GAIN-B domain; this cleavage modulates receptor activity. Additionally, furin is involved in the cleavage at another site, in the middle of the extracellular domain, generating a soluble fragment. In terms of tissue distribution, detected in cerebrospinal fluid (at protein level). Strongly expressed in brain. Also detected in heart, thymus, skeletal muscle, and different cell lines.

It localises to the cell membrane. The protein resides in the secreted. With respect to regulation, receptor activity is regulated by proteolytic processing. The long N-terminal has a an inhibitory effect on the constitutive signaling activity. Removal of the N-terminal region induces an increase of the receptor activity. Functionally, orphan G-protein coupled receptor involved in cell adhesion and probably in cell-cell interactions. Activates NFAT-signaling pathway, a transcription factor, via the G-protein GNAZ. Involved in angiogenesis inhibition. In Homo sapiens (Human), this protein is Adhesion G protein-coupled receptor B2.